The following is a 95-amino-acid chain: Protein RALF-like 16 (95 aa).

The N-terminal stretch at 1–29 is a signal peptide; that stretch reads MVAYEKSPIVFLFATMMLVMFLFCGSGEA. Disulfide bonds link cysteine 45-cysteine 53 and cysteine 65-cysteine 71.

It belongs to the plant rapid alkalinization factor (RALF) family.

Its subcellular location is the secreted. Cell signaling peptide that may regulate plant stress, growth, and development. Mediates a rapid alkalinization of extracellular space by mediating a transient increase in the cytoplasmic Ca(2+) concentration leading to a calcium-dependent signaling events through a cell surface receptor and a concomitant activation of some intracellular mitogen-activated protein kinases. The polypeptide is Protein RALF-like 16 (RALFL16) (Arabidopsis thaliana (Mouse-ear cress)).